The following is a 715-amino-acid chain: DNA ligase (715 aa).

NAD(+) is bound by residues 47–51 (DADYD), 96–97 (SL), and E128. K130 functions as the N6-AMP-lysine intermediate in the catalytic mechanism. Residues R151, E188, K306, and K330 each coordinate NAD(+). The Zn(2+) site is built by C435, C438, C453, and C459. In terms of domain architecture, BRCT spans 637–715 (RRDTAVAGKT…EDEWLALIGN (79 aa)).

The protein belongs to the NAD-dependent DNA ligase family. LigA subfamily. Requires Mg(2+) as cofactor. The cofactor is Mn(2+).

It catalyses the reaction NAD(+) + (deoxyribonucleotide)n-3'-hydroxyl + 5'-phospho-(deoxyribonucleotide)m = (deoxyribonucleotide)n+m + AMP + beta-nicotinamide D-nucleotide.. Its function is as follows. DNA ligase that catalyzes the formation of phosphodiester linkages between 5'-phosphoryl and 3'-hydroxyl groups in double-stranded DNA using NAD as a coenzyme and as the energy source for the reaction. It is essential for DNA replication and repair of damaged DNA. In Rhodopseudomonas palustris (strain TIE-1), this protein is DNA ligase.